Consider the following 71-residue polypeptide: Protein KleB (71 aa).

A DNA-binding region (H-T-H motif) is located at residues 9–28; that stretch reads VTTNCRRCGKSISTLSRSLI.

The chain is Protein KleB (kleB) from Escherichia coli.